A 492-amino-acid chain; its full sequence is N-succinylglutamate 5-semialdehyde dehydrogenase (492 aa).

Residue 220–225 (GSANTG) participates in NAD(+) binding. Catalysis depends on residues Glu243 and Cys277.

The protein belongs to the aldehyde dehydrogenase family. AstD subfamily.

It carries out the reaction N-succinyl-L-glutamate 5-semialdehyde + NAD(+) + H2O = N-succinyl-L-glutamate + NADH + 2 H(+). The protein operates within amino-acid degradation; L-arginine degradation via AST pathway; L-glutamate and succinate from L-arginine: step 4/5. In terms of biological role, catalyzes the NAD-dependent reduction of succinylglutamate semialdehyde into succinylglutamate. This chain is N-succinylglutamate 5-semialdehyde dehydrogenase, found in Escherichia coli (strain SE11).